Reading from the N-terminus, the 432-residue chain is Peptidyl-prolyl cis-trans isomerase cyp6 (432 aa).

The region spanning 1 to 168 (MSVLIETTVG…RDIRIKHTII (168 aa)) is the PPIase cyclophilin-type domain. At Ser-206 the chain carries Phosphoserine. In terms of domain architecture, RRM spans 244 to 322 (NVLFVCKLNP…SRIHVDFSQS (79 aa)). Positions 330–432 (YNSNRDRKRS…DRRYRDDRYR (103 aa)) are disordered. Composition is skewed to basic and acidic residues over residues 341-366 (SRSD…DDYR), 373-395 (DHRD…DDRS), and 406-432 (NCDD…DRYR).

This sequence belongs to the cyclophilin-type PPIase family. PPIL4 subfamily.

The protein localises to the nucleus. The enzyme catalyses [protein]-peptidylproline (omega=180) = [protein]-peptidylproline (omega=0). Functionally, PPIases accelerate the folding of proteins. It catalyzes the cis-trans isomerization of proline imidic peptide bonds in oligopeptides. This chain is Peptidyl-prolyl cis-trans isomerase cyp6 (cyp6), found in Schizosaccharomyces pombe (strain 972 / ATCC 24843) (Fission yeast).